A 361-amino-acid chain; its full sequence is NudC domain-containing protein 3 (361 aa).

Over residues 87–97 (KIRRKEEEEAK) the composition is skewed to basic and acidic residues. Residues 87 to 106 (KIRRKEEEEAKTVSAAAAEK) form a disordered region. Ser-146 bears the Phosphoserine mark. Positions 185 to 277 (AVRENYTWSQ…VGEYWWNAIL (93 aa)) constitute a CS domain. Ser-340 and Ser-355 each carry phosphoserine.

The protein is NudC domain-containing protein 3 (NUDCD3) of Pongo abelii (Sumatran orangutan).